The chain runs to 829 residues: Disintegrin and metalloproteinase domain-containing protein 23 (829 aa).

Positions 1–55 are cleaved as a signal peptide; that stretch reads MKPPGSISRRPTLTGCSLPGASCGPGRCPAGPVPARAPPCRLLLVLLLLPALATS. The propeptide occupies 56-283; sequence SRPRARGAAA…ELQWLRRRKR (228 aa). 4 N-linked (GlcNAc...) asparagine glycosylation sites follow: asparagine 72, asparagine 92, asparagine 97, and asparagine 260. Residues 284-789 are Extracellular-facing; that stretch reads AVNPSRGVFE…EGPKGPSATN (506 aa). The Peptidase M12B domain maps to 296 to 493; that stretch reads KYLELMIVND…GGGACLFNRP (198 aa). Cystine bridges form between cysteine 405–cysteine 488, cysteine 447–cysteine 472, and cysteine 449–cysteine 456. The region spanning 499–585 is the Disintegrin domain; that stretch reads PTECGNGYVE…QCPPNLHKQD (87 aa). N-linked (GlcNAc...) asparagine glycosylation is found at asparagine 544 and asparagine 545. Residues cysteine 557 and cysteine 577 are joined by a disulfide bond. Asparagine 661 and asparagine 729 each carry an N-linked (GlcNAc...) asparagine glycan. The 38-residue stretch at 729–766 folds into the EGF-like domain; it reads NMSSCPLDSRGKVCSGHGVCSNEATCICDFTWAGTDCS. Intrachain disulfides connect cysteine 733/cysteine 748, cysteine 742/cysteine 754, and cysteine 756/cysteine 765. A helical membrane pass occupies residues 790 to 810; the sequence is LIIGSIAGAILVAAIVLGGTG. The Cytoplasmic segment spans residues 811 to 829; sequence WGFKNVKKRRFDPTQQGPI.

Can bind to LGI1 and LGI4. Brain specific.

The protein resides in the cell membrane. The protein localises to the secreted. Its function is as follows. May play a role in cell-cell and cell-matrix interactions. This is a non-catalytic metalloprotease-like protein. This Mus musculus (Mouse) protein is Disintegrin and metalloproteinase domain-containing protein 23 (Adam23).